The sequence spans 480 residues: Glycogen synthase 1 (480 aa).

K15 provides a ligand contact to ADP-alpha-D-glucose.

Belongs to the glycosyltransferase 1 family. Bacterial/plant glycogen synthase subfamily.

It catalyses the reaction [(1-&gt;4)-alpha-D-glucosyl](n) + ADP-alpha-D-glucose = [(1-&gt;4)-alpha-D-glucosyl](n+1) + ADP + H(+). Its pathway is glycan biosynthesis; glycogen biosynthesis. In terms of biological role, synthesizes alpha-1,4-glucan chains using ADP-glucose. In Rhizobium radiobacter (Agrobacterium tumefaciens), this protein is Glycogen synthase 1 (glgA1).